The chain runs to 757 residues: Xaa-Pro dipeptidyl-peptidase (757 aa).

Residues S348, D468, and H498 each act as charge relay system in the active site.

Belongs to the peptidase S15 family. In terms of assembly, homodimer.

The protein resides in the cytoplasm. It carries out the reaction Hydrolyzes Xaa-Pro-|- bonds to release unblocked, N-terminal dipeptides from substrates including Ala-Pro-|-p-nitroanilide and (sequentially) Tyr-Pro-|-Phe-Pro-|-Gly-Pro-|-Ile.. Removes N-terminal dipeptides sequentially from polypeptides having unsubstituted N-termini provided that the penultimate residue is proline. The sequence is that of Xaa-Pro dipeptidyl-peptidase from Streptococcus pneumoniae (strain P1031).